We begin with the raw amino-acid sequence, 617 residues long: Proline--tRNA ligase (617 aa).

Belongs to the class-II aminoacyl-tRNA synthetase family. ProS type 1 subfamily. In terms of assembly, homodimer.

Its subcellular location is the cytoplasm. The enzyme catalyses tRNA(Pro) + L-proline + ATP = L-prolyl-tRNA(Pro) + AMP + diphosphate. Its function is as follows. Catalyzes the attachment of proline to tRNA(Pro) in a two-step reaction: proline is first activated by ATP to form Pro-AMP and then transferred to the acceptor end of tRNA(Pro). As ProRS can inadvertently accommodate and process non-cognate amino acids such as alanine and cysteine, to avoid such errors it has two additional distinct editing activities against alanine. One activity is designated as 'pretransfer' editing and involves the tRNA(Pro)-independent hydrolysis of activated Ala-AMP. The other activity is designated 'posttransfer' editing and involves deacylation of mischarged Ala-tRNA(Pro). The misacylated Cys-tRNA(Pro) is not edited by ProRS. This Streptococcus pneumoniae (strain CGSP14) protein is Proline--tRNA ligase.